Here is a 376-residue protein sequence, read N- to C-terminus: MCFPLPSNSFKTMTDLDYMRRAIALAKQGLGWTNPNPLVGCVIVKNGEIVAEGYHEKIGGWHAERNAVLHCKEDLSGATAYVTLEPCCHHGRTPPCSDLLIERGIKKVFIGSSDPNPLVAGRGANQLRQAGVEVVEGLLKEECDALNPIFFHYIQTKRPYVLMKYAMTADGKIATGSGESKWITGESARARVQQTRHQYSAIMVGVDTVLADNPMLNSRMPNAKQPVRIVCDSQLRTPLDCQLVQTAKEYRTVIATVSDDLQKIEQFRPLGVDVLVCKARNKRVDLQDLLQKLGEMQIDSLLLEGGSSLNFSALESGIVNRVHCYIAPKLVGGKQAKTPIGGEGIQQIDQAVKLKLKSTELIGEDILLDYVVISPL.

Positions methionine 1–lysine 157 are deaminase. The CMP/dCMP-type deaminase domain occupies methionine 13–valine 135. Histidine 62 contributes to the Zn(2+) binding site. Residue glutamate 64 is the Proton donor of the active site. Zn(2+) is bound by residues cysteine 87 and cysteine 96. Residues arginine 158–leucine 376 are reductase. Alanine 166 serves as a coordination point for NADP(+). Serine 180 is a substrate binding site. Position 182 (tryptophan 182) interacts with NADP(+). Substrate is bound at residue arginine 196. 2 residues coordinate NADP(+): threonine 208 and aspartate 212. Residues leucine 216 and arginine 219 each contribute to the substrate site. Serine 233 is an NADP(+) binding site. Residue glutamate 304 coordinates substrate. Residue glycine 306–serine 312 participates in NADP(+) binding.

It in the N-terminal section; belongs to the cytidine and deoxycytidylate deaminase family. This sequence in the C-terminal section; belongs to the HTP reductase family. Zn(2+) is required as a cofactor.

The enzyme catalyses 2,5-diamino-6-hydroxy-4-(5-phosphoribosylamino)-pyrimidine + H2O + H(+) = 5-amino-6-(5-phospho-D-ribosylamino)uracil + NH4(+). It carries out the reaction 5-amino-6-(5-phospho-D-ribitylamino)uracil + NADP(+) = 5-amino-6-(5-phospho-D-ribosylamino)uracil + NADPH + H(+). It functions in the pathway cofactor biosynthesis; riboflavin biosynthesis; 5-amino-6-(D-ribitylamino)uracil from GTP: step 2/4. The protein operates within cofactor biosynthesis; riboflavin biosynthesis; 5-amino-6-(D-ribitylamino)uracil from GTP: step 3/4. In terms of biological role, converts 2,5-diamino-6-(ribosylamino)-4(3h)-pyrimidinone 5'-phosphate into 5-amino-6-(ribosylamino)-2,4(1h,3h)-pyrimidinedione 5'-phosphate. The protein is Riboflavin biosynthesis protein RibD (ribD) of Actinobacillus pleuropneumoniae (Haemophilus pleuropneumoniae).